Reading from the N-terminus, the 872-residue chain is Leucine--tRNA ligase (872 aa).

The short motif at 42 to 52 (PYPSGSLHMGH) is the 'HIGH' region element. A 'KMSKS' region motif is present at residues 634–638 (TMSKS). K637 serves as a coordination point for ATP.

The protein belongs to the class-I aminoacyl-tRNA synthetase family.

The protein localises to the cytoplasm. The catalysed reaction is tRNA(Leu) + L-leucine + ATP = L-leucyl-tRNA(Leu) + AMP + diphosphate. This Trichormus variabilis (strain ATCC 29413 / PCC 7937) (Anabaena variabilis) protein is Leucine--tRNA ligase.